The primary structure comprises 118 residues: Large ribosomal subunit protein bL20 (118 aa).

The protein belongs to the bacterial ribosomal protein bL20 family.

Functionally, binds directly to 23S ribosomal RNA and is necessary for the in vitro assembly process of the 50S ribosomal subunit. It is not involved in the protein synthesizing functions of that subunit. This is Large ribosomal subunit protein bL20 from Psychrobacter sp. (strain PRwf-1).